The chain runs to 339 residues: tRNA (cytidine(56)-2'-O)-methyltransferase (339 aa).

Residues Leu79 and Gly105–Val109 each bind S-adenosyl-L-methionine. The HD domain occupies Leu188–Gly295.

Belongs to the aTrm56 family. Homodimer.

The protein localises to the cytoplasm. It carries out the reaction cytidine(56) in tRNA + S-adenosyl-L-methionine = 2'-O-methylcytidine(56) in tRNA + S-adenosyl-L-homocysteine + H(+). Its function is as follows. Specifically catalyzes the AdoMet-dependent 2'-O-ribose methylation of cytidine at position 56 in tRNAs. This is tRNA (cytidine(56)-2'-O)-methyltransferase from Thermoplasma acidophilum (strain ATCC 25905 / DSM 1728 / JCM 9062 / NBRC 15155 / AMRC-C165).